The sequence spans 98 residues: Large ribosomal subunit protein uL23 (98 aa).

The protein belongs to the universal ribosomal protein uL23 family. As to quaternary structure, part of the 50S ribosomal subunit. Contacts protein L29, and trigger factor when it is bound to the ribosome.

Its function is as follows. One of the early assembly proteins it binds 23S rRNA. One of the proteins that surrounds the polypeptide exit tunnel on the outside of the ribosome. Forms the main docking site for trigger factor binding to the ribosome. The polypeptide is Large ribosomal subunit protein uL23 (Lactobacillus gasseri (strain ATCC 33323 / DSM 20243 / BCRC 14619 / CIP 102991 / JCM 1131 / KCTC 3163 / NCIMB 11718 / NCTC 13722 / AM63)).